The chain runs to 312 residues: Zinc transporter ZitB (312 aa).

Helical transmembrane passes span 21–41, 48–68, 90–110, 123–143, and 164–184; these read LLFAFIVTAGFMLLEVVGGIL, LADAGHMLTDAAALLFALLVV, AAFVNAIALVVITLLIVWEAI, LMMVIAVAGLLANLFAFWILH, and LLGSVGAIVAALIIIWTGWTP.

This sequence belongs to the cation diffusion facilitator (CDF) transporter (TC 2.A.4) family. SLC30A subfamily.

Its subcellular location is the cell inner membrane. In terms of biological role, involved in zinc efflux across the cytoplasmic membrane, thus reducing zinc accumulation in the cytoplasm and rendering bacteria more resistant to zinc. It may contribute to zinc homeostasis at low concentrations of zinc. The polypeptide is Zinc transporter ZitB (Salmonella typhi).